A 105-amino-acid chain; its full sequence is Endogenous retrovirus group K member 8 Rec protein (105 aa).

A disordered region spans residues Met1–Pro48. Basic residues predominate over residues Ala10–Arg20. A Nuclear localization signal motif is present at residues Arg13–Arg20. Residues Trp50–Leu59 carry the Nuclear export signal motif.

As to quaternary structure, forms homodimers, homotrimers, and homotetramers via a C-terminal domain. Associates with XPO1 and with ZNF145.

Its subcellular location is the cytoplasm. It localises to the nucleus. It is found in the nucleolus. Its function is as follows. Retroviral replication requires the nuclear export and translation of unspliced, singly-spliced and multiply-spliced derivatives of the initial genomic transcript. Rec interacts with a highly structured RNA element (RcRE) present in the viral 3'LTR and recruits the cellular nuclear export machinery. This permits export to the cytoplasm of unspliced genomic or incompletely spliced subgenomic viral transcripts. The chain is Endogenous retrovirus group K member 8 Rec protein (ERVK-8) from Homo sapiens (Human).